Reading from the N-terminus, the 686-residue chain is MRVVRCVRRFSASRAVSGQNTTEKIVQAHAVGLRPGHRVASGDYVSIRPAHCMSHDNSWPVALKFMGLGATRVHDARQVVCTLDHDVQNRSEKNLAKYRNIELFAAQQGVDFYPARRGIGHQIMVEEGYAFPLGLTVASDSHSNTYGGVGALGTPVVRTDAAAIWATGQTWWQVPPVARVELTGELPAGVSGKDAIVALCGVFGRDEVLNHAVEFAGPGVARLTVEQRLTVANMTTEWGALSGLFPVDGVLLDWYREQVARAPAGHARLTAARVDALAERAAAMQPDTDARYAKQLTLDLSSLTHYVSGPNSVKVARPIAELAPQQLRIDKAYLLSCTNGRLEDLEAAAAVLRADGSVRQVAPGVEFYIAAASAEVEAQARARGTWDVLLSAGCIPLPSGCGPCIGLGKGLLEAGEVGISATNRNFRGRMGSKDAEAYLASPAVVAASAVLGRIAAPCEVLGLSPPAAPAVRASVAQCGAPAAADGAAAAVEVLPGFPRAITGELVLCDADNINTDGIYPGKYTYEDDIPRETMARVCMENYDLDFQHNVHAGDIVVGGYNFGTGSSREQAATALLAKGVPLVVAGSFSNTFSRNAINNALLTLELPALLQLLRERYADAPSQATRRTGVFLTWDVAAATVTVTVGSPTGERVLHQRVGEFSANLQEIIVKGGLEGWVKHALAQSA.

Residues 1–17 (MRVVRCVRRFSASRAVS) constitute a mitochondrion transit peptide. [4Fe-4S] cluster is bound by residues cysteine 337, cysteine 401, and cysteine 404.

This sequence belongs to the aconitase/IPM isomerase family. It depends on [4Fe-4S] cluster as a cofactor.

Its subcellular location is the mitochondrion. The catalysed reaction is (2R,3S)-homoisocitrate = cis-homoaconitate + H2O. It functions in the pathway amino-acid biosynthesis; L-lysine biosynthesis via AAA pathway; L-alpha-aminoadipate from 2-oxoglutarate: step 3/5. Functionally, catalyzes the reversible hydration of cis-homoaconitate to (2R,3S)-homoisocitrate, a step in the alpha-aminoadipate pathway for lysine biosynthesis. This Eremothecium gossypii (strain ATCC 10895 / CBS 109.51 / FGSC 9923 / NRRL Y-1056) (Yeast) protein is Homoaconitase, mitochondrial (LYS4).